A 293-amino-acid chain; its full sequence is Acetylglutamate kinase (293 aa).

Residues 67–68 (GG), R89, and N190 contribute to the substrate site.

This sequence belongs to the acetylglutamate kinase family. ArgB subfamily.

The protein resides in the cytoplasm. It carries out the reaction N-acetyl-L-glutamate + ATP = N-acetyl-L-glutamyl 5-phosphate + ADP. The protein operates within amino-acid biosynthesis; L-arginine biosynthesis; N(2)-acetyl-L-ornithine from L-glutamate: step 2/4. In terms of biological role, catalyzes the ATP-dependent phosphorylation of N-acetyl-L-glutamate. The protein is Acetylglutamate kinase of Nitrosospira multiformis (strain ATCC 25196 / NCIMB 11849 / C 71).